Consider the following 261-residue polypeptide: Small ribosomal subunit protein eS1 (261 aa).

Positions 1-18 (MAVGKNKRISKGKKGGKK) are enriched in basic residues. Residues 1–22 (MAVGKNKRISKGKKGGKKKAAD) form a disordered region.

It belongs to the eukaryotic ribosomal protein eS1 family. Component of the small ribosomal subunit. Mature ribosomes consist of a small (40S) and a large (60S) subunit. The 40S subunit contains about 33 different proteins and 1 molecule of RNA (18S). The 60S subunit contains about 49 different proteins and 3 molecules of RNA (25S, 5.8S and 5S).

Its subcellular location is the cytoplasm. This Cicer arietinum (Chickpea) protein is Small ribosomal subunit protein eS1.